The primary structure comprises 158 residues: Putative zinc-binding protein ORF9 (158 aa).

The segment at 72–111 adopts an RING-type; degenerate zinc-finger fold; the sequence is CPVCGRAVVGPTVREACGHVTCNACETEACAVDRLCIGGG. A disordered region spans residues 126–158; sequence GPRWRGPRPTRPEAHEAVQRSRGSSEDACTCAP. Residues 135–150 show a composition bias toward basic and acidic residues; the sequence is TRPEAHEAVQRSRGSS.

This chain is Putative zinc-binding protein ORF9 (ORF9), found in Ictalurid herpesvirus 1 (strain Auburn) (IcHV-1).